A 222-amino-acid chain; its full sequence is N-(5'-phosphoribosyl)anthranilate isomerase (222 aa).

The protein belongs to the TrpF family.

It carries out the reaction N-(5-phospho-beta-D-ribosyl)anthranilate = 1-(2-carboxyphenylamino)-1-deoxy-D-ribulose 5-phosphate. It functions in the pathway amino-acid biosynthesis; L-tryptophan biosynthesis; L-tryptophan from chorismate: step 3/5. This is N-(5'-phosphoribosyl)anthranilate isomerase from Rhizobium etli (strain ATCC 51251 / DSM 11541 / JCM 21823 / NBRC 15573 / CFN 42).